Here is a 494-residue protein sequence, read N- to C-terminus: Alpha-amylase-related protein (494 aa).

The signal sequence occupies residues 1–20 (MIKFALALTLCLAGASLSLA). Pyrrolidone carboxylic acid is present on Gln21. Residues Cys48 and Cys104 are joined by a disulfide bond. Residues Asn118, Gln169, and Asp178 each contribute to the Ca(2+) site. A disulfide bridge links Cys157 with Cys171. Arg206 serves as a coordination point for chloride. Asp208 functions as the Nucleophile in the catalytic mechanism. His212 provides a ligand contact to Ca(2+). The active-site Proton donor is the Glu245. Asn308 and Arg343 together coordinate chloride. Intrachain disulfides connect Cys376–Cys382, Cys418–Cys441, and Cys448–Cys460.

Belongs to the glycosyl hydrolase 13 family. Monomer. It depends on Ca(2+) as a cofactor. Chloride serves as cofactor.

The protein resides in the secreted. The enzyme catalyses Endohydrolysis of (1-&gt;4)-alpha-D-glucosidic linkages in polysaccharides containing three or more (1-&gt;4)-alpha-linked D-glucose units.. This Drosophila lini (Fruit fly) protein is Alpha-amylase-related protein (Amyrel).